We begin with the raw amino-acid sequence, 132 residues long: MAYVRLTSLAVLFFLAASVMLNVKKTEGGEFLKCGESCVQGECYTPGCSCDWPICKKNHIIATNAKTVNQHRLLCESHEDCFKKGTGNYCAFFPDSDVHFGWCFYAESDGYLLKDFFKMSKDNLKMPMTIIN.

The signal sequence occupies residues 1–28 (MAYVRLTSLAVLFFLAASVMLNVKKTEG). The segment at residues 29–58 (GEFLKCGESCVQGECYTPGCSCDWPICKKN) is a cross-link (cyclopeptide (Gly-Asn)). 3 disulfide bridges follow: cysteine 34–cysteine 48, cysteine 38–cysteine 50, and cysteine 43–cysteine 55. A propeptide spans 59–132 (HIIATNAKTV…NLKMPMTIIN (74 aa)) (removed in mature form).

Post-translationally, this is a cyclic peptide. In terms of tissue distribution, expressed in flower, stem, shoot and pod but not in root, leaf, seed and nodule (at protein level).

Its function is as follows. Probably participates in a plant defense mechanism. Not active against Gram-negative bacteria E.coli ATCC 700926, K.pneumoniae ATTC 13883 and P.aeruginosa ATCC 39018 at concentration up to 100 uM. Has cytotoxic but no hemolytic activity. This chain is Cliotide T2, found in Clitoria ternatea (Butterfly pea).